The chain runs to 332 residues: Formamidase (332 aa).

Residues 14–259 (FLTALIQYPV…WEIVTAEVYP (246 aa)) enclose the CN hydrolase domain. E60 serves as the catalytic Proton acceptor. K132 functions as the Proton donor in the catalytic mechanism. The Nucleophile role is filled by C165.

This sequence belongs to the carbon-nitrogen hydrolase superfamily. Aliphatic amidase family.

It carries out the reaction formamide + H2O = formate + NH4(+). Is an aliphatic amidase with a restricted substrate specificity, as it only hydrolyzes formamide. The chain is Formamidase from Bacillus cereus (strain B4264).